Here is a 350-residue protein sequence, read N- to C-terminus: Dihydroorotase (350 aa).

His17 and His19 together coordinate Zn(2+). Residues 19 to 21 and Asn45 each bind substrate; that span reads HLR. Zn(2+) contacts are provided by Lys103, His140, and His178. Lys103 carries the post-translational modification N6-carboxylysine. His140 contributes to the substrate binding site. Residue Leu224 coordinates substrate. Asp252 provides a ligand contact to Zn(2+). The active site involves Asp252. The substrate site is built by His256 and Ala268.

Belongs to the metallo-dependent hydrolases superfamily. DHOase family. Class II DHOase subfamily. Homodimer. The cofactor is Zn(2+).

It carries out the reaction (S)-dihydroorotate + H2O = N-carbamoyl-L-aspartate + H(+). It functions in the pathway pyrimidine metabolism; UMP biosynthesis via de novo pathway; (S)-dihydroorotate from bicarbonate: step 3/3. Catalyzes the reversible cyclization of carbamoyl aspartate to dihydroorotate. The chain is Dihydroorotase from Buchnera aphidicola subsp. Acyrthosiphon pisum (strain 5A).